We begin with the raw amino-acid sequence, 211 residues long: Bcl-2 homologous antagonist/killer (211 aa).

The disordered stretch occupies residues 1–28 (MASGQGPGPPRQECGEPALPSASEEQVA). Residue Ala-2 is modified to N-acetylalanine. The BH3 signature appears at 74–88 (VGRQLAIIGDDINRR). Residues 117–136 (SLFESGINWGRVVALLGFGY) carry the BH1 motif. Zn(2+) contacts are provided by Asp-160 and His-164. The BH2 signature appears at 169–184 (RWIAQRGGWVAALNLG). Residues 188–205 (ILNVLVVLGVVLLGQFVV) form a helical membrane-spanning segment.

The protein belongs to the Bcl-2 family. Homodimer. Formation of the homodimer is zinc-dependent. Forms heterodimers with BCL2 and BCL2L1 isoform Bcl-X(L). Forms heterooligomers with BAX. Interacts with BCL2A1. Interacts with RTL10/BOP. Interacts with VDAC1. Interacts with GIMAP3/IAN4 and GIMAP5/IAN5. As to quaternary structure, (Microbial infection) Interacts with vaccinia virus protein F1. In terms of assembly, (Microbial infection) Interacts with myxoma virus protein M11L. (Microbial infection) Interacts with Epstein-Barr virus protein BALF1. As to quaternary structure, (Microbial infection) Interacts with adenovirus protein E1B 19K. Expressed in a wide variety of tissues, with highest levels in the heart and skeletal muscle.

The protein localises to the mitochondrion outer membrane. In terms of biological role, plays a role in the mitochondrial apoptotic process. Upon arrival of cell death signals, promotes mitochondrial outer membrane (MOM) permeabilization by oligomerizing to form pores within the MOM. This releases apoptogenic factors into the cytosol, including cytochrome c, promoting the activation of caspase 9 which in turn processes and activates the effector caspases. The sequence is that of Bcl-2 homologous antagonist/killer (BAK1) from Homo sapiens (Human).